The sequence spans 254 residues: MSRKNLIKLNHDPTVTYSTKDDADELFDDLSSSPLHENVSWISWFCSRPGREYFVEVKEDFIEDLFNLTGLNLAVPFYNEALDLILDRTAPDTLENFDMDVIETSAQILYGLIHQRYIITRTGLHQMAEKYSMGIFGCCPRVNCCYTHVLPAGLSDIVGKMPVMLFCPNCLDLYAPSSSRYKNIDGSFFGATFPHLFFESYPELNPKRSIPCGKIYQPRIYGFKVSELSKTGPRMQWLRMYLEDSGSDSESESD.

It belongs to the casein kinase 2 subunit beta family. In terms of assembly, tetramer composed of two alpha chains, one beta chain and one beta' chain. Post-translationally, phosphorylated by alpha subunit.

In terms of biological role, regulatory subunit of casein kinase II/CK2. As part of the kinase complex regulates the basal catalytic activity of the alpha subunit a constitutively active serine/threonine-protein kinase that phosphorylates a large number of substrates containing acidic residues C-terminal to the phosphorylated serine or threonine. The protein is Casein kinase II subunit beta-2 of Schizosaccharomyces pombe (strain 972 / ATCC 24843) (Fission yeast).